The primary structure comprises 316 residues: Probable cobalamin biosynthesis protein CobD (316 aa).

Transmembrane regions (helical) follow at residues 1–21, 50–70, 89–109, 165–185, and 294–314; these read MITE…DIVL, ISGM…GFAL, ILAL…KSLI, PLFY…ALAF, and ISLI…LLIL.

This sequence belongs to the CobD/CbiB family.

Its subcellular location is the cell membrane. Its pathway is cofactor biosynthesis; adenosylcobalamin biosynthesis. In terms of biological role, converts cobyric acid to cobinamide by the addition of aminopropanol on the F carboxylic group. The protein is Probable cobalamin biosynthesis protein CobD of Methanothrix thermoacetophila (strain DSM 6194 / JCM 14653 / NBRC 101360 / PT) (Methanosaeta thermophila).